Reading from the N-terminus, the 207-residue chain is Superoxide dismutase [Mn] (207 aa).

Positions 28, 76, 160, and 164 each coordinate Mn(2+).

This sequence belongs to the iron/manganese superoxide dismutase family. Requires Mn(2+) as cofactor.

The enzyme catalyses 2 superoxide + 2 H(+) = H2O2 + O2. In terms of biological role, destroys superoxide anion radicals which are normally produced within the cells and which are toxic to biological systems. This chain is Superoxide dismutase [Mn] (sodA), found in Mycobacterium leprae (strain TN).